Here is a 553-residue protein sequence, read N- to C-terminus: Solute carrier family 2, facilitated glucose transporter member 10 (553 aa).

Residues 1–15 are Cytoplasmic-facing; sequence MGLRSTTLVLAATSS. A helical membrane pass occupies residues 16-36; it reads LLGGLIFGYELGIISGALLML. Residues 37–48 are Extracellular-facing; that stretch reads KTVFQLTCFEQE. The chain crosses the membrane as a helical span at residues 49 to 69; sequence ALVSAVLFGALLASLIGGFII. Residues 70–82 lie on the Cytoplasmic side of the membrane; the sequence is DRSGRRTSIMGSN. Residues 83–103 traverse the membrane as a helical segment; sequence LVVLAGSIILIATSSFWWLVV. Residues 104–105 lie on the Extracellular side of the membrane; the sequence is GR. Residues 106–126 form a helical membrane-spanning segment; it reads VTVGFAISISSMACCIYVSEI. The Cytoplasmic segment spans residues 127 to 132; it reads VRPHQR. A helical membrane pass occupies residues 133–153; sequence GTLVSLYETGITVGILISYAM. Over 154–165 the chain is Extracellular; that stretch reads NYFLSAVNDGWK. The helical transmembrane segment at 166–186 threads the bilayer; it reads YMFGLAIIPAAFQFIVILFLP. The Cytoplasmic portion of the chain corresponds to 187–240; the sequence is SKPHTLNFWEQDSDNGFIELEEAGESGEFKPDTYDKQYTFLDLFRSKDNMRTRT. The chain crosses the membrane as a helical span at residues 241–261; sequence LLGLGLVLFQQFTGQPNVLYY. Residue 250-251 participates in D-glucose binding; it reads QQ. At 262 to 277 the chain is on the extracellular side; sequence ASTIFRSVGFQSNSSA. Asparagine 274 is a glycosylation site (N-linked (GlcNAc...) asparagine). Residues 278–298 traverse the membrane as a helical segment; it reads VLASVGLGVVKVASTLIAICF. Over 299 to 305 the chain is Cytoplasmic; it reads ADKAGRR. The chain crosses the membrane as a helical span at residues 306-326; it reads ILLLAGCIVMTIAISGIGIVS. Topologically, residues 327–413 are extracellular; the sequence is FMVELDSHRD…PPAGPDSNYA (87 aa). N-linked (GlcNAc...) asparagine glycosylation is found at asparagine 344, asparagine 351, and asparagine 400. A helical transmembrane segment spans residues 414–434; the sequence is ILNWITLLSMMAFVSAFSIGF. Residues 435 to 462 lie on the Cytoplasmic side of the membrane; that stretch reads GPMTWLVLSEIYPADIRGRAFAFCNSFN. Tryptophan 439 is a binding site for D-glucose. A helical membrane pass occupies residues 463–482; that stretch reads WAANLLITLTFLEVIGSIGL. Position 483 (glycine 483) is a topological domain, extracellular. Residues 484–504 traverse the membrane as a helical segment; sequence WTFLLYGGVGLLAIAFIYFFI. The Cytoplasmic segment spans residues 505–553; the sequence is PETKGQSLEEIDQQLSSKRISKRRETSKGVRKRPSTGPPYQRVGKSNWT. A disordered region spans residues 522–553; sequence KRISKRRETSKGVRKRPSTGPPYQRVGKSNWT.

This sequence belongs to the major facilitator superfamily. Sugar transporter (TC 2.A.1.1) family. Glucose transporter subfamily.

It is found in the endomembrane system. It localises to the cytoplasm. Its subcellular location is the perinuclear region. The catalysed reaction is D-glucose(out) = D-glucose(in). In terms of biological role, facilitative glucose transporter required for the development of the cardiovascular system. The protein is Solute carrier family 2, facilitated glucose transporter member 10 of Xenopus laevis (African clawed frog).